The sequence spans 457 residues: Secreted RxLR effector protein 8 (457 aa).

A signal peptide spans 1–19 (MRGTLATALLLVISSRVAT). Residues 48 to 69 (RFLRGSRKQRDDLAPTAADENR) carry the RxLR-dEER motif. A glycan (N-linked (GlcNAc...) asparagine) is linked at Asn68. 2 disordered regions span residues 110 to 188 (RLSL…ALKS) and 398 to 457 (RQTI…RSSS). The span at 135-152 (SASTSTTSDIATSSSRTS) shows a compositional bias: low complexity. Composition is skewed to polar residues over residues 153–163 (NQRTPKTQASL) and 176–187 (SKNQFKKSTALK). Residues 442–457 (IKSKDHARKKRPRSSS) show a composition bias toward basic residues.

It belongs to the RxLR effector family.

The protein localises to the secreted. Its subcellular location is the host nucleus. Secreted effector that completely suppresses the host cell death induced by cell death-inducing proteins. This chain is Secreted RxLR effector protein 8, found in Plasmopara viticola (Downy mildew of grapevine).